The primary structure comprises 650 residues: Probable basic-leucine zipper transcription factor K (650 aa).

Residues 37-180 adopt a coiled-coil conformation; the sequence is IDNNNNNYSN…KQQKQQQQEQ (144 aa). 2 disordered regions span residues 109–130 and 242–279; these read IPQQ…QEQE and TTLN…NNNL. The span at 118 to 129 shows a compositional bias: acidic residues; it reads DQQEDQDQEQEQ. The segment covering 242-251 has biased composition (polar residues); sequence TTLNTNLQSD. Positions 252–278 are enriched in low complexity; that stretch reads NNNNNNNNNNNNNNNNNNNNNNNNNNN. The stretch at 259 to 286 forms a coiled coil; sequence NNNNNNNNNNNNNNNNNNNNLLNEKQIE. Residues 305–368 form the bZIP domain; the sequence is FNKIEKGKRN…IEIMRSEPES (64 aa). The interval 307–327 is basic motif; the sequence is KIEKGKRNQTESSKNFRERKK. The tract at residues 330 to 337 is leucine-zipper; that stretch reads IKDIELKL. Positions 452 to 466 are enriched in low complexity; sequence NNNNNNNNNNNNNNN. The disordered stretch occupies residues 452–473; the sequence is NNNNNNNNNNNNNNNDNDDDNE.

It belongs to the bZIP family.

The protein resides in the nucleus. In terms of biological role, probable transcriptional regulator. This is Probable basic-leucine zipper transcription factor K (bzpK) from Dictyostelium discoideum (Social amoeba).